The sequence spans 143 residues: Succinate dehydrogenase assembly factor 2, mitochondrial (143 aa).

The protein belongs to the SDHAF2 family. As to quaternary structure, interacts with the flavoprotein subunit within the SDH catalytic dimer.

Its subcellular location is the mitochondrion matrix. Functionally, plays an essential role in the assembly of succinate dehydrogenase (SDH), an enzyme complex (also referred to as respiratory complex II) that is a component of both the tricarboxylic acid (TCA) cycle and the mitochondrial electron transport chain, and which couples the oxidation of succinate to fumarate with the reduction of ubiquinone (coenzyme Q) to ubiquinol. Required for flavinylation (covalent attachment of FAD) of the flavoprotein subunit of the SDH catalytic dimer. This is Succinate dehydrogenase assembly factor 2, mitochondrial from Schizosaccharomyces japonicus (strain yFS275 / FY16936) (Fission yeast).